Here is a 397-residue protein sequence, read N- to C-terminus: 2,6-dihydroxypyridine 3-monooxygenase (397 aa).

Residues 14-16 (SIS), 35-36 (ER), V49, L120, D306, and 316-320 (AAGGA) contribute to the FAD site.

In terms of assembly, homodimer. FAD is required as a cofactor.

It carries out the reaction 2,6-dihydroxypyridine + NADH + O2 + H(+) = 2,3,6-trihydroxypyridine + NAD(+) + H2O. Its pathway is alkaloid degradation; nicotine degradation. In terms of biological role, catalyzes the conversion of 2,6-dihydroxypyridine into 2,3,6-trihydroxypyridine in the nicotine degradation pathway. This Paenarthrobacter nicotinovorans (Arthrobacter nicotinovorans) protein is 2,6-dihydroxypyridine 3-monooxygenase (dhpH).